Here is a 446-residue protein sequence, read N- to C-terminus: Maltoporin (446 aa).

The first 25 residues, 1-25 (MMITLRKLPLAVAVAAGVMSAQAMA), serve as a signal peptide directing secretion.

Belongs to the porin LamB (TC 1.B.3) family. Homotrimer formed of three 18-stranded antiparallel beta-barrels, containing three independent channels.

The protein localises to the cell outer membrane. The enzyme catalyses beta-maltose(in) = beta-maltose(out). In terms of biological role, involved in the transport of maltose and maltodextrins. This Escherichia coli O127:H6 (strain E2348/69 / EPEC) protein is Maltoporin.